Reading from the N-terminus, the 182-residue chain is Vacuolar protein sorting-associated protein 29 (182 aa).

Lys-50 carries the post-translational modification N6-acetyllysine.

This sequence belongs to the VPS29 family. As to quaternary structure, component of the commander complex consisting of the CCC subcomplex and the retriever subcomplex. Component of the heterotrimeric retriever complex formed by VPS26C, VPS29 and VPS35L; within the complex interacts with VPS35L. Component of the heterotrimeric retromer cargo-selective complex (CSC), also described as vacuolar protein sorting subcomplex (VPS), formed by VPS26 (VPS26A or VPS26B), VPS29 and VPS35. The CSC has a highly elongated structure with VPS26 and VPS29 binding independently at opposite distal ends of VPS35 as central platform. The CSC is believed to associate with variable sorting nexins to form functionally distinct retromer complex variants. The originally described retromer complex (also called SNX-BAR retromer) is a pentamer containing the CSC and a heterodimeric membrane-deforming subcomplex formed between SNX1 or SNX2 and SNX5 or SNX6 (also called SNX-BAR subcomplex); the respective CSC and SNX-BAR subcomplexes associate with low affinity. The CSC associates with SNX3 to form a SNX3-retromer complex. The CSC associates with SNX27, the WASH complex and the SNX-BAR subcomplex to form the SNX27-retromer complex. Interacts with VPS26A, VPS35, SNX1, SNX2, SNX3, SNX27, WASHC5. Interacts with TBC1D5; this interaction is blocked by VPS35L in the retriever complex. Interacts with SNX17; the interaction is indirect; SNX17 (via its C-terminus) interacts with the retriever complex (via VPS26C and VPS35L). Interacts with VPS26B and ANKRD27.

It localises to the cytoplasm. It is found in the membrane. The protein localises to the endosome membrane. Its subcellular location is the early endosome. The protein resides in the late endosome. Functionally, component of the commander complex that is essential for endosomal recycling of transmembrane cargos; the commander complex is composed of the CCC subcomplex and the retriever subcomplex. Component of the retriever complex, which is a heterotrimeric complex related to retromer cargo-selective complex (CSC) and essential for retromer-independent retrieval and recycling of numerous cargos such as integrin alpha-5/beta-1 (ITGA5:ITGB1). Component of the retromer cargo-selective complex (CSC). The CSC is believed to be the core functional component of retromer or respective retromer complex variants acting to prevent missorting of selected transmembrane cargo proteins into the lysosomal degradation pathway. The recruitment of the CSC to the endosomal membrane involves RAB7A and SNX3. The SNX-BAR retromer mediates retrograde transport of cargo proteins from endosomes to the trans-Golgi network (TGN) and is involved in endosome-to-plasma membrane transport for cargo protein recycling. The SNX3-retromer mediates the retrograde endosome-to-TGN transport of WLS distinct from the SNX-BAR retromer pathway. The SNX27-retromer is believed to be involved in endosome-to-plasma membrane trafficking and recycling of a broad spectrum of cargo proteins. The CSC seems to act as recruitment hub for other proteins, such as the WASH complex and TBC1D5. Required to regulate transcytosis of the polymeric immunoglobulin receptor (pIgR-pIgA). In the endosomes, retriever complex drives the retrieval and recycling of NxxY-motif-containing cargo proteins by coupling to SNX17, a cargo essential for the homeostatic maintenance of numerous cell surface proteins associated with processes that include cell migration, cell adhesion, nutrient supply and cell signaling. The recruitment of the retriever complex to the endosomal membrane involves CCC and WASH complexes. Involved in GLUT1 endosome-to-plasma membrane trafficking; the function is dependent of association with ANKRD27. This chain is Vacuolar protein sorting-associated protein 29, found in Rattus norvegicus (Rat).